We begin with the raw amino-acid sequence, 250 residues long: Ubiquinone/menaquinone biosynthesis C-methyltransferase UbiE (250 aa).

Residues Ser-73, Asp-94, and 122 to 123 (NA) contribute to the S-adenosyl-L-methionine site.

This sequence belongs to the class I-like SAM-binding methyltransferase superfamily. MenG/UbiE family.

It catalyses the reaction a 2-demethylmenaquinol + S-adenosyl-L-methionine = a menaquinol + S-adenosyl-L-homocysteine + H(+). It carries out the reaction a 2-methoxy-6-(all-trans-polyprenyl)benzene-1,4-diol + S-adenosyl-L-methionine = a 5-methoxy-2-methyl-3-(all-trans-polyprenyl)benzene-1,4-diol + S-adenosyl-L-homocysteine + H(+). It functions in the pathway quinol/quinone metabolism; menaquinone biosynthesis; menaquinol from 1,4-dihydroxy-2-naphthoate: step 2/2. The protein operates within cofactor biosynthesis; ubiquinone biosynthesis. In terms of biological role, methyltransferase required for the conversion of demethylmenaquinol (DMKH2) to menaquinol (MKH2) and the conversion of 2-polyprenyl-6-methoxy-1,4-benzoquinol (DDMQH2) to 2-polyprenyl-3-methyl-6-methoxy-1,4-benzoquinol (DMQH2). This Legionella pneumophila subsp. pneumophila (strain Philadelphia 1 / ATCC 33152 / DSM 7513) protein is Ubiquinone/menaquinone biosynthesis C-methyltransferase UbiE.